A 377-amino-acid chain; its full sequence is Chaperone protein DnaJ 1 (377 aa).

Positions Asp4–Gly68 constitute a J domain. A CR-type zinc finger spans residues Gly136 to Thr218. 8 residues coordinate Zn(2+): Cys149, Cys152, Cys166, Cys169, Cys192, Cys195, Cys206, and Cys209. CXXCXGXG motif repeat units follow at residues Cys149–Gly156, Cys166–Gly173, Cys192–Gly199, and Cys206–Gly213.

It belongs to the DnaJ family. As to quaternary structure, homodimer. Zn(2+) serves as cofactor.

It is found in the cytoplasm. Its function is as follows. Participates actively in the response to hyperosmotic and heat shock by preventing the aggregation of stress-denatured proteins and by disaggregating proteins, also in an autonomous, DnaK-independent fashion. Unfolded proteins bind initially to DnaJ; upon interaction with the DnaJ-bound protein, DnaK hydrolyzes its bound ATP, resulting in the formation of a stable complex. GrpE releases ADP from DnaK; ATP binding to DnaK triggers the release of the substrate protein, thus completing the reaction cycle. Several rounds of ATP-dependent interactions between DnaJ, DnaK and GrpE are required for fully efficient folding. Also involved, together with DnaK and GrpE, in the DNA replication of plasmids through activation of initiation proteins. The chain is Chaperone protein DnaJ 1 from Synechocystis sp. (strain ATCC 27184 / PCC 6803 / Kazusa).